A 218-amino-acid polypeptide reads, in one-letter code: Small ribosomal subunit protein uS3 (218 aa).

Residues 38-106 (IRKYIESKLA…RVHINIVEIK (69 aa)) enclose the KH type-2 domain.

It belongs to the universal ribosomal protein uS3 family. Part of the 30S ribosomal subunit. Forms a tight complex with proteins S10 and S14.

In terms of biological role, binds the lower part of the 30S subunit head. Binds mRNA in the 70S ribosome, positioning it for translation. This chain is Small ribosomal subunit protein uS3, found in Ligilactobacillus salivarius (strain UCC118) (Lactobacillus salivarius).